The chain runs to 235 residues: 7-cyano-7-deazaguanine synthase (235 aa).

9–19 contacts ATP; sequence FSGGQDSTTCL. 4 residues coordinate Zn(2+): cysteine 197, cysteine 212, cysteine 215, and cysteine 218.

Belongs to the QueC family. The cofactor is Zn(2+).

The catalysed reaction is 7-carboxy-7-deazaguanine + NH4(+) + ATP = 7-cyano-7-deazaguanine + ADP + phosphate + H2O + H(+). It participates in purine metabolism; 7-cyano-7-deazaguanine biosynthesis. Functionally, catalyzes the ATP-dependent conversion of 7-carboxy-7-deazaguanine (CDG) to 7-cyano-7-deazaguanine (preQ(0)). This chain is 7-cyano-7-deazaguanine synthase, found in Polaromonas sp. (strain JS666 / ATCC BAA-500).